The sequence spans 364 residues: BTB/POZ and TAZ domain-containing protein 2 (364 aa).

Residues 34 to 106 (SDVEIVTSDN…LYSSSLTEDE (73 aa)) enclose the BTB domain. Residues 203–212 (RKKRRRRHRK) carry the Nuclear localization signal motif. A TAZ-type zinc finger spans residues 215 to 316 (DLYMQLSEAM…PDSCRVPLCR (102 aa)). Residues 327 to 350 (KMGEDTKWKLLVTRVVSAKAMTSL) are caM-binding.

As to quaternary structure, interacts with CUL3A. Interacts with GTE11/BET10 through the BTB domain. As to expression, preferentially expressed in young leaves and roots.

Its subcellular location is the nucleus. It localises to the cytoplasm. It functions in the pathway protein modification; protein ubiquitination. Its function is as follows. May act as a substrate-specific adapter of an E3 ubiquitin-protein ligase complex (CUL3-RBX1-BTB) which mediates the ubiquitination and subsequent proteasomal degradation of target proteins. Plays a key role as a component of the TAC1-mediated telomerase activation pathway certainly by targeting a telomerase repressor to degradation. Seems to occupy an integral position in a complex signaling network that perceives, integrates, and responds to multiple, and sometimes competing, signals. Enhances responses to auxin in postgermination and vegetative development. Also negatively regulates ABA- and sugar-mediated inhibition of the germination. Essential for female and male gametophyte development. The sequence is that of BTB/POZ and TAZ domain-containing protein 2 (BT2) from Arabidopsis thaliana (Mouse-ear cress).